Here is a 703-residue protein sequence, read N- to C-terminus: DnaJ homolog subfamily C member 14 (703 aa).

Disordered regions lie at residues 1 to 150 and 164 to 229; these read MAQK…DGSS and EDEE…RKRS. A compositionally biased stretch (low complexity) spans 17–28; that stretch reads SGGSSLITSGSS. Positions 75–84 are enriched in pro residues; sequence HGPPRGPGPP. 2 stretches are compositionally biased toward acidic residues: residues 89-102 and 164-176; these read YPDESETCSEESGV and EDEELEEEYDDEE. Basic residues predominate over residues 193–202; that stretch reads PPSRRQRHRF. The segment covering 203–218 has biased composition (basic and acidic residues); that stretch reads LTKEDVRDSGRRDPKA. Residues 219–228 are compositionally biased toward basic residues; the sequence is PGRHRLARKR. 3 consecutive transmembrane segments (helical) span residues 254–274, 305–325, and 327–347; these read WWLIELLVLVGEYVETCGYLI, VMFQFLSQSFFSVAGLFIRLL, and VVGAFLLLALALFLGCLQLGW. Residues 444-508 form the J domain; the sequence is NPFHVLGVEA…ERRKEYEMKR (65 aa). 2 disordered regions span residues 622–643 and 659–703; these read FGSRVPGTSGRQRATPESPPAD and MSNG…PFQR. Residues 673 to 684 show a composition bias toward polar residues; it reads GTTSTSRPNSSV. Over residues 691 to 703 the composition is skewed to basic residues; that stretch reads PKRRKKVRRPFQR.

As to quaternary structure, interacts with the FxxxFxxxF motif of DRD1 via its C-terminal domain. Detected in heart, brain, lung, liver, skeletal muscle, kidney and testis.

The protein resides in the endoplasmic reticulum membrane. Regulates the export of target proteins, such as DRD1, from the endoplasmic reticulum to the cell surface. The chain is DnaJ homolog subfamily C member 14 (Dnajc14) from Rattus norvegicus (Rat).